The primary structure comprises 135 residues: Large ribosomal subunit protein uL16m (135 aa).

Belongs to the universal ribosomal protein uL16 family.

Its subcellular location is the mitochondrion. In Prototheca wickerhamii, this protein is Large ribosomal subunit protein uL16m (RPL16).